The primary structure comprises 862 residues: Semaphorin-4D (862 aa).

The N-terminal stretch at 1-21 (MRMCTPIRGLLMALAVMFGTA) is a signal peptide. The 479-residue stretch at 22–500 (MAFAPIPRIT…SNSGVVQAPL (479 aa)) folds into the Sema domain. Residues 22–734 (MAFAPIPRIT…TMYLKSSDNR (713 aa)) are Extracellular-facing. N49 and N77 each carry an N-linked (GlcNAc...) asparagine glycan. 2 cysteine pairs are disulfide-bonded: C97–C108 and C126–C135. N-linked (GlcNAc...) asparagine glycosylation is found at N139 and N191. 2 cysteine pairs are disulfide-bonded: C257–C370 and C281–C326. N-linked (GlcNAc...) asparagine glycosylation is found at N329, N379, and N419. Positions 502 to 551 (FCGKHGTCEDCVLARDPYCAWSPPTATCVALHQTESPSRGLIQEMSGDAS) constitute a PSI domain. 4 disulfide bridges follow: C503-C520, C509-C553, C512-C529, and C576-C624. In terms of domain architecture, Ig-like C2-type spans 554-636 (PDKSKGSYRQ…EERVKNKTVF (83 aa)). Residues N613 and N632 are each glycosylated (N-linked (GlcNAc...) asparagine). A helical membrane pass occupies residues 735 to 755 (LLMSLFLFFFVLFLCLFFYNC). At 756-862 (YKGYLPRQCL…KFADSDADGD (107 aa)) the chain is on the cytoplasmic side. The segment at 794 to 837 (VEPGSFSQQNGEHPKPALDTGYETEQDTITSKVPTDREDSQRID) is disordered. Positions 827–837 (PTDREDSQRID) are enriched in basic and acidic residues. Phosphoserine is present on S833.

It belongs to the semaphorin family. As to quaternary structure, homodimer. Interacts with PLXNB2. Interacts with PLXNB1. Strongly expressed in skeletal muscle, peripheral blood lymphocytes, spleen, and thymus and also expressed at lower levels in testes, brain, kidney, small intestine, prostate, heart, placenta, lung and pancreas, but not in colon and liver.

The protein resides in the cell membrane. Functionally, cell surface receptor for PLXNB1 and PLXNB2 that plays an important role in cell-cell signaling. Regulates GABAergic synapse development. Promotes the development of inhibitory synapses in a PLXNB1-dependent manner. Modulates the complexity and arborization of developing neurites in hippocampal neurons by activating PLXNB1 and interaction with PLXNB1 mediates activation of RHOA. Promotes the migration of cerebellar granule cells. Plays a role in the immune system; induces B-cells to aggregate and improves their viability (in vitro). Induces endothelial cell migration through the activation of PTK2B/PYK2, SRC, and the phosphatidylinositol 3-kinase-AKT pathway. The polypeptide is Semaphorin-4D (SEMA4D) (Homo sapiens (Human)).